Consider the following 196-residue polypeptide: Molybdenum cofactor guanylyltransferase (196 aa).

Residues 14–16, lysine 27, aspartate 73, and aspartate 106 each bind GTP; that span reads LAG. Aspartate 106 contributes to the Mg(2+) binding site.

This sequence belongs to the MobA family. Monomer. Requires Mg(2+) as cofactor.

It is found in the cytoplasm. It catalyses the reaction Mo-molybdopterin + GTP + H(+) = Mo-molybdopterin guanine dinucleotide + diphosphate. Transfers a GMP moiety from GTP to Mo-molybdopterin (Mo-MPT) cofactor (Moco or molybdenum cofactor) to form Mo-molybdopterin guanine dinucleotide (Mo-MGD) cofactor. The polypeptide is Molybdenum cofactor guanylyltransferase (Acidiphilium cryptum (strain JF-5)).